The sequence spans 137 residues: Large ribosomal subunit protein uL16 (137 aa).

This sequence belongs to the universal ribosomal protein uL16 family. In terms of assembly, part of the 50S ribosomal subunit.

Functionally, binds 23S rRNA and is also seen to make contacts with the A and possibly P site tRNAs. This chain is Large ribosomal subunit protein uL16, found in Ruegeria pomeroyi (strain ATCC 700808 / DSM 15171 / DSS-3) (Silicibacter pomeroyi).